We begin with the raw amino-acid sequence, 93 residues long: Pyrimidine/purine nucleoside phosphorylase (93 aa).

Belongs to the nucleoside phosphorylase PpnP family.

It carries out the reaction a purine D-ribonucleoside + phosphate = a purine nucleobase + alpha-D-ribose 1-phosphate. The enzyme catalyses adenosine + phosphate = alpha-D-ribose 1-phosphate + adenine. The catalysed reaction is cytidine + phosphate = cytosine + alpha-D-ribose 1-phosphate. It catalyses the reaction guanosine + phosphate = alpha-D-ribose 1-phosphate + guanine. It carries out the reaction inosine + phosphate = alpha-D-ribose 1-phosphate + hypoxanthine. The enzyme catalyses thymidine + phosphate = 2-deoxy-alpha-D-ribose 1-phosphate + thymine. The catalysed reaction is uridine + phosphate = alpha-D-ribose 1-phosphate + uracil. It catalyses the reaction xanthosine + phosphate = alpha-D-ribose 1-phosphate + xanthine. Functionally, catalyzes the phosphorolysis of diverse nucleosides, yielding D-ribose 1-phosphate and the respective free bases. Can use uridine, adenosine, guanosine, cytidine, thymidine, inosine and xanthosine as substrates. Also catalyzes the reverse reactions. This Pseudomonas syringae pv. tomato (strain ATCC BAA-871 / DC3000) protein is Pyrimidine/purine nucleoside phosphorylase.